Consider the following 318-residue polypeptide: Taste receptor type 2 member 60 (318 aa).

Topologically, residues 1–7 (MNGDHMV) are extracellular. A helical membrane pass occupies residues 8–28 (LGSSVTDKKAIILVTILLLLR). Over 29–40 (LVAIAGNGFITA) the chain is Cytoplasmic. A helical transmembrane segment spans residues 41-61 (ALGVEWVLRRMLLPCDKLLVS). Topologically, residues 62–88 (LGASHFCLQSVVMGKTIYVFLYPMAFP) are extracellular. Residues 89–109 (YNPVLQFLAFQWDFLNAATLW) traverse the membrane as a helical segment. Topologically, residues 110 to 128 (FSTWLSVFYCVKIATFTHP) are cytoplasmic. Residues 129–149 (VFFWLKHKLSGWLPWMIFSYV) traverse the membrane as a helical segment. Residues 150–183 (GLSSFTTILFFIGNHRMYQNYLKNHLQPWNVTGN) lie on the Extracellular side of the membrane. N-linked (GlcNAc...) asparagine glycosylation occurs at N179. A helical transmembrane segment spans residues 184–204 (SIRSYCEKFYLFPLKMITWTM). Over 205 to 234 (PTAVFFICMILLITSLGRHMKKALLTTSGF) the chain is Cytoplasmic. The helical transmembrane segment at 235-255 (REPSVQAHIKALLALLSFAML) threads the bilayer. At 256-264 (FISYFLSLV) the chain is on the extracellular side. The helical transmembrane segment at 265-285 (FSAAGIFPPLDFKFWVWESVI) threads the bilayer. Over 286–318 (YLCAAVHPIILLFSNCRLRAVLKSRRSSRCGTP) the chain is Cytoplasmic.

Belongs to the G-protein coupled receptor T2R family.

It localises to the membrane. Its function is as follows. Receptor that may play a role in the perception of bitterness and is gustducin-linked. May play a role in sensing the chemical composition of the gastrointestinal content. The activity of this receptor may stimulate alpha gustducin, mediate PLC-beta-2 activation and lead to the gating of TRPM5. In Pan paniscus (Pygmy chimpanzee), this protein is Taste receptor type 2 member 60 (TAS2R60).